The following is a 295-amino-acid chain: Protoheme IX farnesyltransferase (295 aa).

Topologically, residues 1 to 9 are cytoplasmic; that stretch reads MSVKHFIQI. Residues 10–28 traverse the membrane as a helical segment; it reads TKPGIIFGNVLSVAGGFFL. The Periplasmic segment spans residues 29-37; the sequence is ASKGHVDFA. Residues 38 to 56 traverse the membrane as a helical segment; it reads LFLAVVIGTSLVVASGCVF. At 57-78 the chain is on the cytoplasmic side; it reads NNCIDRDIDHKMERTKNRVMVQ. A helical membrane pass occupies residues 79-97; it reads GGMSLPLALIYATLLGVAG. Topologically, residues 98–107 are periplasmic; the sequence is FSLLYVQANP. A helical transmembrane segment spans residues 108 to 126; the sequence is LSAFCALIGFIVYVGFYSL. Residues 127–197 lie on the Cytoplasmic side of the membrane; it reads WLKRKSVHGT…YSAANIPVLP (71 aa). The helical transmembrane segment at 198–216 threads the bilayer; that stretch reads VARGILAAKKQIVLYVLAF. Topologically, residues 217 to 228 are periplasmic; it reads VLATLMLTLGGY. Residues 229-247 traverse the membrane as a helical segment; sequence AGLGYLAVAAAMGLYWLYM. Over 248 to 268 the chain is Cytoplasmic; that stretch reads AWGGYKAEDDSKWARKVFGFS. A helical membrane pass occupies residues 269-287; that stretch reads ILTVTALSVMMGVDSQTAA. The Periplasmic segment spans residues 288–295; it reads DVLMTYAR.

Belongs to the UbiA prenyltransferase family. It depends on Mg(2+) as a cofactor. The cofactor is Ca(2+).

The protein resides in the cell inner membrane. The enzyme catalyses heme b + (2E,6E)-farnesyl diphosphate + H2O = Fe(II)-heme o + diphosphate. In terms of biological role, converts protoheme IX and farnesyl diphosphate to heme O. The polypeptide is Protoheme IX farnesyltransferase (cyoE) (Pseudomonas putida (Arthrobacter siderocapsulatus)).